The primary structure comprises 741 residues: Polyribonucleotide nucleotidyltransferase (741 aa).

Residues Asp489 and Asp495 each contribute to the Mg(2+) site. Residues 556 to 615 (PKIDSIQIPVDKIKVVIGKGGETIDKIIAETGVTIDIDEEGLVQIFSSDQDAIDRAKTII) enclose the KH domain. The region spanning 625-693 (GEVYTVPVVR…EKGRVDASIK (69 aa)) is the S1 motif domain. Residues 695-741 (LLPKPEKNEDGENGEEHRHCCCSHHKPDHHNESVEAPKKSDESETKE) form a disordered region. Basic and acidic residues-rich tracts occupy residues 698–713 (KPEK…EHRH) and 723–741 (HHNE…ETKE).

It belongs to the polyribonucleotide nucleotidyltransferase family. Requires Mg(2+) as cofactor.

It is found in the cytoplasm. It carries out the reaction RNA(n+1) + phosphate = RNA(n) + a ribonucleoside 5'-diphosphate. Involved in mRNA degradation. Catalyzes the phosphorolysis of single-stranded polyribonucleotides processively in the 3'- to 5'-direction. This chain is Polyribonucleotide nucleotidyltransferase, found in Streptococcus thermophilus (strain CNRZ 1066).